We begin with the raw amino-acid sequence, 129 residues long: Small ribosomal subunit protein uS11 (129 aa).

Belongs to the universal ribosomal protein uS11 family. Part of the 30S ribosomal subunit. Interacts with proteins S7 and S18. Binds to IF-3.

In terms of biological role, located on the platform of the 30S subunit, it bridges several disparate RNA helices of the 16S rRNA. Forms part of the Shine-Dalgarno cleft in the 70S ribosome. This Macrococcus caseolyticus (strain JCSC5402) (Macrococcoides caseolyticum) protein is Small ribosomal subunit protein uS11.